The chain runs to 396 residues: Protein-export membrane protein SecD (396 aa).

6 helical membrane-spanning segments follow: residues 12–32 (ILIL…KGLD), 243–263 (LKGT…IVSI), 272–292 (IPIL…ASLI), 298–318 (LPSI…QIVI), 338–358 (FFII…LFVL), and 360–380 (VGML…GIFI).

This sequence belongs to the SecD/SecF family. SecD subfamily. In terms of assembly, part of the protein translocation apparatus. Forms a complex with SecF.

It is found in the cell membrane. Involved in protein export. In Methanocaldococcus jannaschii (strain ATCC 43067 / DSM 2661 / JAL-1 / JCM 10045 / NBRC 100440) (Methanococcus jannaschii), this protein is Protein-export membrane protein SecD.